The sequence spans 122 residues: Aspartate 1-decarboxylase (122 aa).

Ser-25 serves as the catalytic Schiff-base intermediate with substrate; via pyruvic acid. Ser-25 carries the pyruvic acid (Ser) modification. Substrate is bound at residue Thr-57. Tyr-58 (proton donor) is an active-site residue. Residue 73–75 (GAA) coordinates substrate.

The protein belongs to the PanD family. In terms of assembly, heterooctamer of four alpha and four beta subunits. Pyruvate is required as a cofactor. Is synthesized initially as an inactive proenzyme, which is activated by self-cleavage at a specific serine bond to produce a beta-subunit with a hydroxyl group at its C-terminus and an alpha-subunit with a pyruvoyl group at its N-terminus.

It is found in the cytoplasm. The enzyme catalyses L-aspartate + H(+) = beta-alanine + CO2. The protein operates within cofactor biosynthesis; (R)-pantothenate biosynthesis; beta-alanine from L-aspartate: step 1/1. Its function is as follows. Catalyzes the pyruvoyl-dependent decarboxylation of aspartate to produce beta-alanine. The sequence is that of Aspartate 1-decarboxylase from Bordetella avium (strain 197N).